The chain runs to 208 residues: Ypt/Rab-type GTPase YPT7 (208 aa).

GTP-binding positions include 17–23 (SGVGKTS), 33–40 (YSQQYKAT), Gly67, and 126–129 (NKID). Positions 37–45 (YKATIGADF) match the Effector region motif. Residue Lys147 forms a Glycyl lysine isopeptide (Lys-Gly) (interchain with G-Cter in ubiquitin) linkage. Position 158 to 160 (158 to 160 (SAK)) interacts with GTP. Residues Cys206 and Cys208 are each lipidated (S-geranylgeranyl cysteine). At Cys208 the chain carries Cysteine methyl ester.

Belongs to the small GTPase superfamily. Rab family. In terms of assembly, interacts with IVY1. Interacts with YIF1, YIP4 and YIP5. Interacts with the HOPS complex. Interacts with the class C-Vps complex. Interacts with VPS35. Interacts with VPS39. Interacts with the GDP dissociation inhibitor GDI1. Interacts with CCZ1.

It is found in the late endosome. Its subcellular location is the vacuole membrane. With respect to regulation, rab activation is generally mediated by a guanine exchange factor (GEF), while inactivation through hydrolysis of bound GTP is catalyzed by a GTPase activating protein (GAP). YPT7 is activated by GEFs MON1-CCZ1 complex (MC1) and VAM6/VPS39, and inactivated by GAPs GYP7 and GYP1. Functionally, ypt/Rab-type GTPases are key regulators of membrane trafficking and intracellular vesicular transport. They act as molecular switches that convert between GTP-bound and GDP-bound states, and regulate virtually all steps of membrane traffic from the formation of the transport vesicle at the donor membrane to its fusion at the target membrane. In the GDP-bound state, Ypt proteins are predominantly cytosolic, solubilized through the interaction with a GDP dissociation inhibitor (GDI). In the GTP-bound state, the proteins are membrane bound and interact with specific effector proteins that select cargo, promote vesicle movement, or verify the correct site of fusion. Involved in regulation of vesicular protein transport in exo- and endocytosis. Involved in regulation of late endosome to vacuole trafficking and homotypic vacuole fusion, by interacting in its GTP-bound state on the donor membrane with the large multiprotein HOPS/class C-Vps tethering complex on the acceptor membrane. Involved in retromer assembly and cargo export, recognizing the cargo selection complex (CSC). GTP-bound YPT7 recruits CSC to vacuolar membranes via retromer subunit VPS35. Interacts with the HOPS complex subunit VPS39 independent of the HOPS complex at mitochondria-vacuole contact sites (vCLAMPs), providing a physical and metabolic interconnection between the endocytic pathway and mitochondria. This is Ypt/Rab-type GTPase YPT7 (YPT7) from Saccharomyces cerevisiae (strain ATCC 204508 / S288c) (Baker's yeast).